A 75-amino-acid chain; its full sequence is Peptide Ctri9610 (75 aa).

A signal peptide spans 1–22; it reads MNSKYLFVFLILNVIFIDLCQG. The residue at position 41 (K41) is a Lysine amide. Residues 42 to 75 constitute a propeptide that is removed on maturation; the sequence is GTRRRELGSQYDYLQDFRKRELDLDDLLSKFPDY.

The protein belongs to the non-disulfide-bridged peptide (NDBP) superfamily. Short antimicrobial peptide (group 4) family. In terms of tissue distribution, expressed by the venom gland.

Its subcellular location is the secreted. This is Peptide Ctri9610 from Chaerilus tricostatus (Scorpion).